Consider the following 381-residue polypeptide: Class E basic helix-loop-helix protein 22 (381 aa).

Disordered stretches follow at residues 30 to 94 (RLEA…GGGG), 135 to 154 (RGSV…DSDG), and 188 to 242 (HLHG…EQKA). A compositionally biased stretch (gly residues) spans 82–94 (GGGGGSAGSGGGG). A compositionally biased stretch (gly residues) spans 198-225 (GGLGGGGGGGSSSGSSGGGGGSGSGSGG). A bHLH domain is found at 242–296 (ALRLNINARERRRMHDLNDALDELRAVIPYAHSPSVRKLSKIATLLLAKNYILMQ).

In terms of assembly, interacts with PRDM8. In terms of tissue distribution, brain-specific, with the highest expression in the cerebellum.

The protein localises to the nucleus. Functionally, inhibits DNA binding of TCF3/E47 homodimers and TCF3 (E47)/NEUROD1 heterodimers and acts as a strong repressor of Neurod1 and Myod-responsive genes, probably by heterodimerization with class a basic helix-loop-helix factors. Despite the presence of an intact basic domain, does not bind to DNA. In the brain, may function as an area-specific transcription factor that regulates the postmitotic acquisition of area identities and elucidate the genetic hierarchy between progenitors and postmitotic neurons driving neocortical arealization. May be required for the survival of a specific population of inhibitory neurons in the superficial laminae of the spinal cord dorsal horn that may regulate pruritis. Seems to play a crucial role in the retinogenesis, in the specification of amacrine and bipolar subtypes. Forms with PRDM8 a transcriptional repressor complex controlling genes involved in neural development and neuronal differentiation. This is Class E basic helix-loop-helix protein 22 (BHLHE22) from Homo sapiens (Human).